The chain runs to 624 residues: Alpha-amylase 1 (624 aa).

Residues M1–R28 form the signal peptide. One can recognise a CBM21 domain in the interval E40–S133. A disulfide bridge links C177 with C185. Position 230 (W230) interacts with substrate. N268 contributes to the Ca(2+) binding site. H269 serves as a coordination point for substrate. C297 and C311 are disulfide-bonded. N304 carries an N-linked (GlcNAc...) asparagine glycan. The Ca(2+) site is built by E309 and D322. An N-linked (GlcNAc...) asparagine glycan is attached at N344. R351 serves as a coordination point for substrate. Positions 353, 357, and 377 each coordinate Ca(2+). Residue D353 is the Nucleophile of the active site. K356–H357 serves as a coordination point for substrate. E377 serves as the catalytic Proton donor. G381 lines the substrate pocket. C387 and C430 form a disulfide bridge. Substrate contacts are provided by D444 and R491. A disulfide bridge links C587 with C622.

Belongs to the glycosyl hydrolase 13 family. Ca(2+) serves as cofactor.

It localises to the secreted. It carries out the reaction Endohydrolysis of (1-&gt;4)-alpha-D-glucosidic linkages in polysaccharides containing three or more (1-&gt;4)-alpha-linked D-glucose units.. The chain is Alpha-amylase 1 (LKA1) from Lipomyces kononenkoae (Yeast).